We begin with the raw amino-acid sequence, 124 residues long: MPTISQLIRRGRETVAQKSASPALRECPQKRGVCTRVYTTTPKKPNSALRKVARVRLTNGYEVTTYIPGIGHNLQEHSVVLVRGGRVKDLPGVRYHIVRGALDTAGVQNRNRGRSKYGAKRPKK.

Asp-89 carries the post-translational modification 3-methylthioaspartic acid. The tract at residues 103–124 is disordered; that stretch reads DTAGVQNRNRGRSKYGAKRPKK. The segment covering 111-124 has biased composition (basic residues); it reads NRGRSKYGAKRPKK.

This sequence belongs to the universal ribosomal protein uS12 family. In terms of assembly, part of the 30S ribosomal subunit. Contacts proteins S8 and S17. May interact with IF1 in the 30S initiation complex.

With S4 and S5 plays an important role in translational accuracy. Its function is as follows. Interacts with and stabilizes bases of the 16S rRNA that are involved in tRNA selection in the A site and with the mRNA backbone. Located at the interface of the 30S and 50S subunits, it traverses the body of the 30S subunit contacting proteins on the other side and probably holding the rRNA structure together. The combined cluster of proteins S8, S12 and S17 appears to hold together the shoulder and platform of the 30S subunit. The polypeptide is Small ribosomal subunit protein uS12 (Desulforudis audaxviator (strain MP104C)).